The primary structure comprises 482 residues: Cysteine--tRNA ligase (482 aa).

Cys-29 contributes to the Zn(2+) binding site. The 'HIGH' region motif lies at 31-41 (VTVYDYCHLGH). Residues Cys-213, His-238, and Glu-242 each contribute to the Zn(2+) site. Residues 275 to 279 (KMSKS) carry the 'KMSKS' region motif. Position 278 (Lys-278) interacts with ATP.

Belongs to the class-I aminoacyl-tRNA synthetase family. As to quaternary structure, monomer. It depends on Zn(2+) as a cofactor.

Its subcellular location is the cytoplasm. The enzyme catalyses tRNA(Cys) + L-cysteine + ATP = L-cysteinyl-tRNA(Cys) + AMP + diphosphate. The protein is Cysteine--tRNA ligase of Gloeobacter violaceus (strain ATCC 29082 / PCC 7421).